We begin with the raw amino-acid sequence, 53 residues long: Large ribosomal subunit protein eL40 (53 aa).

Belongs to the eukaryotic ribosomal protein eL40 family.

The protein is Large ribosomal subunit protein eL40 of Pyrobaculum neutrophilum (strain DSM 2338 / JCM 9278 / NBRC 100436 / V24Sta) (Thermoproteus neutrophilus).